We begin with the raw amino-acid sequence, 541 residues long: CTP synthase (541 aa).

The amidoligase domain stretch occupies residues 1 to 265 (MTRFIFITGG…DAVVCRHFGL (265 aa)). Ser-13 provides a ligand contact to CTP. Ser-13 lines the UTP pocket. 14–19 (SLGKGL) serves as a coordination point for ATP. Tyr-54 is an L-glutamine binding site. Asp-71 contacts ATP. Mg(2+)-binding residues include Asp-71 and Glu-139. Residues 146–148 (DIE), 186–191 (KTKPTQ), and Lys-222 each bind CTP. Residues 186–191 (KTKPTQ) and Lys-222 each bind UTP. In terms of domain architecture, Glutamine amidotransferase type-1 spans 290-540 (TIAIVGKYIS…IAAAVRQSRL (251 aa)). Gly-352 contributes to the L-glutamine binding site. The Nucleophile; for glutamine hydrolysis role is filled by Cys-379. Residues 380-383 (FGMQ), Glu-403, and Arg-468 contribute to the L-glutamine site. Catalysis depends on residues His-513 and Glu-515.

The protein belongs to the CTP synthase family. As to quaternary structure, homotetramer.

The enzyme catalyses UTP + L-glutamine + ATP + H2O = CTP + L-glutamate + ADP + phosphate + 2 H(+). It carries out the reaction L-glutamine + H2O = L-glutamate + NH4(+). It catalyses the reaction UTP + NH4(+) + ATP = CTP + ADP + phosphate + 2 H(+). Its pathway is pyrimidine metabolism; CTP biosynthesis via de novo pathway; CTP from UDP: step 2/2. Allosterically activated by GTP, when glutamine is the substrate; GTP has no effect on the reaction when ammonia is the substrate. The allosteric effector GTP functions by stabilizing the protein conformation that binds the tetrahedral intermediate(s) formed during glutamine hydrolysis. Inhibited by the product CTP, via allosteric rather than competitive inhibition. Its function is as follows. Catalyzes the ATP-dependent amination of UTP to CTP with either L-glutamine or ammonia as the source of nitrogen. Regulates intracellular CTP levels through interactions with the four ribonucleotide triphosphates. The sequence is that of CTP synthase from Paramagnetospirillum magneticum (strain ATCC 700264 / AMB-1) (Magnetospirillum magneticum).